Reading from the N-terminus, the 188-residue chain is GPI-anchored hemophore ARB_01017 (188 aa).

Residues 1 to 17 (MKLSVVALAALVSVAAA) form the signal peptide. One can recognise a CFEM domain in the interval 18–107 (QGVSELPKCA…SSSSGSASST (90 aa)). Disulfide bonds link cysteine 26–cysteine 64, cysteine 30–cysteine 59, cysteine 39–cysteine 45, and cysteine 47–cysteine 80. Residue aspartate 42 participates in heme binding. The interval 95–163 (TGGSSSSGSA…ATSTGAPTQT (69 aa)) is disordered. Residue asparagine 165 is the site of GPI-anchor amidated asparagine attachment. The propeptide at 166–188 (AAASVNANGGLLAAIAALVIAVA) is removed in mature form.

This sequence belongs to the RBT5 family. In terms of processing, the GPI-anchor is attached to the protein in the endoplasmic reticulum and serves to target the protein to the cell surface. There, the glucosamine-inositol phospholipid moiety is cleaved off and the GPI-modified mannoprotein is covalently attached via its lipidless GPI glycan remnant to the 1,6-beta-glucan of the outer cell wall layer.

The protein localises to the secreted. It is found in the cell wall. Its subcellular location is the cell membrane. GPI-anchored cell wall protein involved in stabilizing the cell wall. In Arthroderma benhamiae (strain ATCC MYA-4681 / CBS 112371) (Trichophyton mentagrophytes), this protein is GPI-anchored hemophore ARB_01017.